The chain runs to 313 residues: Protein YABBY 3 (313 aa).

The C4-type zinc finger occupies 65 to 92 (CHYCDTVLVVSVPSSSLFETVTVRCGHC). Disordered stretches follow at residues 107-149 (TTAA…SLLD) and 180-221 (NNSP…KRQR). A compositionally biased stretch (pro residues) spans 112–128 (APPPPPPPPPPPPPPAA).

This sequence belongs to the YABBY family. In terms of tissue distribution, expressed in shoot apex and young inflorescences.

The protein localises to the nucleus. This Oryza sativa subsp. japonica (Rice) protein is Protein YABBY 3 (YAB3).